We begin with the raw amino-acid sequence, 26 residues long: Maculatin-3.1 (26 aa).

An Alanine amide modification is found at alanine 26.

Expressed by the skin dorsal glands.

It localises to the secreted. Its function is as follows. Shows antibacterial activity against S.uberis. This is Maculatin-3.1 from Ranoidea genimaculata (Brown-spotted tree frog).